A 244-amino-acid polypeptide reads, in one-letter code: CTD nuclear envelope phosphatase 1 (244 aa).

Residues 7-29 (LLGLRTFVAFAAKLWSFFIYLLR) traverse the membrane as a helical segment. The region spanning 57–224 (AQVKRKILVL…LNLLPMLDAL (168 aa)) is the FCP1 homology domain.

This sequence belongs to the dullard family. As to quaternary structure, interacts with CNEP1R1; the complex dephosphorylates LPIN1 and LPIN2. Muscle specific with lower expression in other metabolic tissues.

The protein localises to the endoplasmic reticulum membrane. The protein resides in the nucleus membrane. It carries out the reaction O-phospho-L-seryl-[protein] + H2O = L-seryl-[protein] + phosphate. It catalyses the reaction O-phospho-L-threonyl-[protein] + H2O = L-threonyl-[protein] + phosphate. Its function is as follows. Serine/threonine protein phosphatase forming with CNEP1R1 an active phosphatase complex that dephosphorylates and may activate LPIN1 and LPIN2. LPIN1 and LPIN2 are phosphatidate phosphatases that catalyze the conversion of phosphatidic acid to diacylglycerol and control the metabolism of fatty acids at different levels. May indirectly modulate the lipid composition of nuclear and/or endoplasmic reticulum membranes and be required for proper nuclear membrane morphology and/or dynamics. May also indirectly regulate the production of lipid droplets and triacylglycerol. May antagonize BMP signaling. This is CTD nuclear envelope phosphatase 1 (Ctdnep1) from Mus musculus (Mouse).